The following is a 215-amino-acid chain: Ribonuclease T (215 aa).

Positions valine 20–phenylalanine 194 constitute an Exonuclease domain. Positions 23, 25, 181, and 186 each coordinate Mg(2+). The Proton donor/acceptor role is filled by histidine 181.

Belongs to the RNase T family. As to quaternary structure, homodimer. It depends on Mg(2+) as a cofactor.

Its function is as follows. Trims short 3' overhangs of a variety of RNA species, leaving a one or two nucleotide 3' overhang. Responsible for the end-turnover of tRNA: specifically removes the terminal AMP residue from uncharged tRNA (tRNA-C-C-A). Also appears to be involved in tRNA biosynthesis, especially in strains lacking other exoribonucleases. In terms of biological role, a general regulator of small RNAs (sRNA), contributes to their degradation. Upon overexpression suppresses sRNA-mediated RhyB-silencing of multiple RNA targets; overexpression leads to nearly complete loss of RhyB sRNA. This is Ribonuclease T from Escherichia coli (strain K12).